A 206-amino-acid chain; its full sequence is Transcription factor BTF3 (206 aa).

The tract at residues 1–42 (MRRTGAPAQADSRGRGRARGGCPGGEATLSQPPPRGGTRGQE) is disordered. Omega-N-methylarginine is present on arginine 19. A Phosphoserine modification is found at serine 30. An N6-methyllysine mark is found at lysine 46 and lysine 54. The region spanning 82–147 (TADDKKLQFS…AETKQLTEML (66 aa)) is the NAC-A/B domain. Threonine 160 is subject to Phosphothreonine. Residues 170 to 206 (PKQSVDGKAPLATGEDDDDEVPDLVENFDEASKNEAN) form a disordered region. Serine 173 bears the Phosphoserine mark. Acidic residues predominate over residues 183–198 (GEDDDDEVPDLVENFD).

Belongs to the NAC-beta family. In terms of assembly, part of the nascent polypeptide-associated complex (NAC), which is a heterodimer of NACA and BTF3 (via NAC-A/B domains). NAC associates with ribosomes through the BTF3/NACB subunit. Both subunits can contact nascent polypeptide chains.

The protein localises to the cytoplasm. Its subcellular location is the nucleus. When associated with NACA, prevents inappropriate targeting of non-secretory polypeptides to the endoplasmic reticulum (ER). Binds to nascent polypeptide chains as they emerge from the ribosome and blocks their interaction with the signal recognition particle (SRP), which normally targets nascent secretory peptides to the ER. BTF3 is also a general transcription factor that can form a stable complex with RNA polymerase II. Required for the initiation of transcription. The polypeptide is Transcription factor BTF3 (BTF3) (Homo sapiens (Human)).